The primary structure comprises 306 residues: tRNA (guanine-N(7)-)-methyltransferase (306 aa).

A compositionally biased stretch (polar residues) spans 1–19; sequence MSSTAPLDSKATEQITTAA. Residues 1–65 are disordered; it reads MSSTAPLDSK…EASPELPSDE (65 aa). Residues G121, 144–145, 180–181, and C200 each bind S-adenosyl-L-methionine; these read EI and NA. D203 is an active-site residue. S-adenosyl-L-methionine is bound at residue 278–280; sequence TEE.

The protein belongs to the class I-like SAM-binding methyltransferase superfamily. TrmB family. Forms a complex with TRM82.

Its subcellular location is the nucleus. The enzyme catalyses guanosine(46) in tRNA + S-adenosyl-L-methionine = N(7)-methylguanosine(46) in tRNA + S-adenosyl-L-homocysteine. Its pathway is tRNA modification; N(7)-methylguanine-tRNA biosynthesis. Functionally, catalyzes the formation of N(7)-methylguanine at position 46 (m7G46) in tRNA. The protein is tRNA (guanine-N(7)-)-methyltransferase of Lodderomyces elongisporus (strain ATCC 11503 / CBS 2605 / JCM 1781 / NBRC 1676 / NRRL YB-4239) (Yeast).